Reading from the N-terminus, the 382-residue chain is Lipid-A-disaccharide synthase (382 aa).

It belongs to the LpxB family.

It catalyses the reaction 2-N,3-O-bis[(3R)-3-hydroxytetradecanoyl]-alpha-D-glucosaminyl 1-phosphate + UDP-2-N,3-O-bis[(3R)-3-hydroxytetradecanoyl]-alpha-D-glucosamine = lipid A disaccharide (E. coli) + UDP + H(+). The enzyme catalyses a lipid X + a UDP-2-N,3-O-bis[(3R)-3-hydroxyacyl]-alpha-D-glucosamine = a lipid A disaccharide + UDP + H(+). Its pathway is glycolipid biosynthesis; lipid IV(A) biosynthesis; lipid IV(A) from (3R)-3-hydroxytetradecanoyl-[acyl-carrier-protein] and UDP-N-acetyl-alpha-D-glucosamine: step 5/6. Functionally, condensation of UDP-2,3-diacylglucosamine and 2,3-diacylglucosamine-1-phosphate to form lipid A disaccharide, a precursor of lipid A, a phosphorylated glycolipid that anchors the lipopolysaccharide to the outer membrane of the cell. In Citrobacter koseri (strain ATCC BAA-895 / CDC 4225-83 / SGSC4696), this protein is Lipid-A-disaccharide synthase.